Reading from the N-terminus, the 827-residue chain is Cadherin-17 (827 aa).

The signal sequence occupies residues 1-25 (MVSAQLHFLCLLTLYLTCGYGEEGK). Residues 26-786 (FSGPLKPMTF…RQDGIPTVGM (761 aa)) are Extracellular-facing. Cadherin domains are found at residues 29 to 127 (PLKP…TFLQ), 128 to 243 (SKYE…APEP), 244 to 339 (VEIR…PPTC), 340 to 448 (LSPV…IPIF), 449 to 565 (ETSN…VPVF), 566 to 666 (PQRI…PPRL), and 667 to 776 (AKDY…RPAG). N-linked (GlcNAc...) asparagine glycans are attached at residues asparagine 148, asparagine 249, asparagine 418, asparagine 545, asparagine 573, asparagine 586, and asparagine 721. The helical transmembrane segment at 787-807 (AVGILLTTFLVIGIILAVVFI) threads the bilayer. Topologically, residues 808–827 (RMRKDKVENPQSPENKPLRS) are cytoplasmic.

In terms of tissue distribution, highest expression is found in intestine with lower expression in spleen, bone marrow, lung and testis. No expression detected in liver, kidney, heart, brain or skeletal muscle. Expressed in precursor B-cells and myeloid cells.

Its subcellular location is the cell membrane. Cadherins are calcium-dependent cell adhesion proteins. They preferentially interact with themselves in a homophilic manner in connecting cells; cadherins may thus contribute to the sorting of heterogeneous cell types. LI-cadherin may have a role in the morphological organization of liver and intestine. In Mus musculus (Mouse), this protein is Cadherin-17 (Cdh17).